The primary structure comprises 95 residues: Defensin alpha 4 (95 aa).

An N-terminal signal peptide occupies residues 1-19 (MRTLALLAAILLVALQAQA). Positions 20-62 (EHISVSIDEVVDQQPPQAEDQDVAIYVKEHESSALEALGVKAG) are excised as a propeptide. 3 cysteine pairs are disulfide-bonded: C65–C93, C67–C82, and C72–C92.

It belongs to the alpha-defensin family.

It is found in the secreted. Host-defense peptide that has antimicrobial activity. Inhibits corticotropin (ACTH)-stimulated corticosterone production (in vitro). The chain is Defensin alpha 4 from Oryctolagus cuniculus (Rabbit).